A 261-amino-acid polypeptide reads, in one-letter code: Thiazole synthase (261 aa).

Lysine 101 serves as the catalytic Schiff-base intermediate with DXP. 1-deoxy-D-xylulose 5-phosphate contacts are provided by residues glycine 162, 188–189 (AG), and 210–211 (NT).

It belongs to the ThiG family. In terms of assembly, homotetramer. Forms heterodimers with either ThiH or ThiS.

Its subcellular location is the cytoplasm. It carries out the reaction [ThiS sulfur-carrier protein]-C-terminal-Gly-aminoethanethioate + 2-iminoacetate + 1-deoxy-D-xylulose 5-phosphate = [ThiS sulfur-carrier protein]-C-terminal Gly-Gly + 2-[(2R,5Z)-2-carboxy-4-methylthiazol-5(2H)-ylidene]ethyl phosphate + 2 H2O + H(+). It functions in the pathway cofactor biosynthesis; thiamine diphosphate biosynthesis. Functionally, catalyzes the rearrangement of 1-deoxy-D-xylulose 5-phosphate (DXP) to produce the thiazole phosphate moiety of thiamine. Sulfur is provided by the thiocarboxylate moiety of the carrier protein ThiS. In vitro, sulfur can be provided by H(2)S. The sequence is that of Thiazole synthase from Aromatoleum aromaticum (strain DSM 19018 / LMG 30748 / EbN1) (Azoarcus sp. (strain EbN1)).